Consider the following 89-residue polypeptide: Small ribosomal subunit protein uS17 (89 aa).

It belongs to the universal ribosomal protein uS17 family. Part of the 30S ribosomal subunit.

Its function is as follows. One of the primary rRNA binding proteins, it binds specifically to the 5'-end of 16S ribosomal RNA. The chain is Small ribosomal subunit protein uS17 from Bacteroides fragilis (strain ATCC 25285 / DSM 2151 / CCUG 4856 / JCM 11019 / LMG 10263 / NCTC 9343 / Onslow / VPI 2553 / EN-2).